Reading from the N-terminus, the 196-residue chain is Serine/arginine-rich splicing factor RSZ22A (196 aa).

The region spanning 2 to 71 is the RRM domain; sequence SRVYVGNLDP…NGWRVEQSHN (70 aa). S48 is modified (phosphoserine). Over residues 58–70 the composition is skewed to basic and acidic residues; sequence VDGKNGWRVEQSH. The interval 58 to 196 is disordered; it reads VDGKNGWRVE…GLKDVRRSRS (139 aa). Gly residues predominate over residues 72–87; that stretch reads RGGGGGRGGGRGGGDG. Residues 88-100 show a composition bias toward basic and acidic residues; the sequence is GRGRGGSDLKCYE. The CCHC-type zinc finger occupies 96 to 113; the sequence is LKCYECGESGHFARECRS. Over residues 119–135 the composition is skewed to basic residues; the sequence is GRRRSRSRSRSPPRYRK. A phosphoserine mark is found at S136, S144, S146, S151, S159, S170, and S196. A compositionally biased stretch (low complexity) spans 139–149; that stretch reads YGGRRSYSPRA.

It belongs to the splicing factor SR family. RSZ subfamily. Component of the spliceosome. Extensively phosphorylated on serine residues in the RS domain.

The protein resides in the nucleus. Probably involved in intron recognition and spliceosome assembly. In Arabidopsis thaliana (Mouse-ear cress), this protein is Serine/arginine-rich splicing factor RSZ22A (RSZ22A).